Here is a 678-residue protein sequence, read N- to C-terminus: Electrogenic aspartate/glutamate antiporter SLC25A12, mitochondrial (678 aa).

N-acetylalanine is present on A2. Residues 2–294 (AVKVQTTKRG…TLADIERIAP (293 aa)) form a regulatory N-terminal domain region. The Mitochondrial intermembrane portion of the chain corresponds to 2–329 (AVKVQTTKRG…WLQIAESAYR (328 aa)). 5 residues coordinate Ca(2+): D65, T67, D69, L71, and E76. EF-hand domains follow at residues 65 to 76 (DQTKDGLISYQE), 86 to 121 (APDS…TIIH), 125 to 155 (PFNW…QFLQ), and 157 to 192 (LQLE…IRSH). Positions 295–310 (LAEGALPYNLAELQRQ) are linker loop domain. The carrier domain stretch occupies residues 320 to 612 (WLQIAESAYR…RWFYIDFGGL (293 aa)). Solcar repeat units lie at residues 324–416 (AESA…VRDK), 424–508 (VPLP…CKLL), and 516–604 (VGGL…LQRW). A helical transmembrane segment spans residues 330-347 (FTLGSVAGAVGATAVYPI). Topologically, residues 348-390 (DLVKTRMQNQRGSGSVVGELMYKNSFDCFKKVLRYEGFFGLYR) are mitochondrial matrix. Residues 391–410 (GLIPQLIGVAPEKAIKLTVN) form a helical membrane-spanning segment. The Mitochondrial intermembrane portion of the chain corresponds to 411-433 (DFVRDKFTRRDGSVPLPAEVLAG). The helical transmembrane segment at 434–447 (GCAGGSQVIFTNPL) threads the bilayer. Over 448–482 (EIVKIRLQVAGEITTGPRVSALNVLRDLGIFGLYK) the chain is Mitochondrial matrix. Residues 483-502 (GAKACFLRDIPFSAIYFPVY) form a helical membrane-spanning segment. The Mitochondrial intermembrane portion of the chain corresponds to 503-521 (AHCKLLLADENGHVGGLNL). A helical membrane pass occupies residues 522–539 (LAAGAMAGVPAASLVTPA). At 540 to 578 (DVIKTRLQVAARAGQTTYSGVIDCFRKILREEGPSAFWK) the chain is on the mitochondrial matrix side. Residues 579 to 598 (GTAARVFRSSPQFGVTLVTY) traverse the membrane as a helical segment. Topologically, residues 599 to 678 (ELLQRWFYID…QPKAAVAATQ (80 aa)) are mitochondrial intermembrane. The C-terminal domain stretch occupies residues 613–675 (KPAGSEPTPK…AVVQPKAAVA (63 aa)).

Belongs to the mitochondrial carrier (TC 2.A.29) family. In terms of assembly, homodimer (via N-terminus). In terms of tissue distribution, expressed predominantly in the heart and skeletal muscle, weakly in brain and kidney.

Its subcellular location is the mitochondrion inner membrane. The enzyme catalyses L-aspartate(in) + L-glutamate(out) + H(+)(out) = L-aspartate(out) + L-glutamate(in) + H(+)(in). The catalysed reaction is 3-sulfino-L-alanine(out) + L-glutamate(in) + H(+)(in) = 3-sulfino-L-alanine(in) + L-glutamate(out) + H(+)(out). It catalyses the reaction 3-sulfino-L-alanine(out) + L-aspartate(in) = 3-sulfino-L-alanine(in) + L-aspartate(out). Its activity is regulated as follows. Activated by calcium-binding in the mitochondrial intermembrane space. Inhibited by pyridoxal 5'-phosphate, bathophenathroline, mercurials, diethyl pyrocarbonate and N-ethylmaleimide. Mitochondrial electrogenic aspartate/glutamate antiporter that favors efflux of aspartate and entry of glutamate and proton within the mitochondria as part of the malate-aspartate shuttle. Also mediates the uptake of L-cysteinesulfinate (3-sulfino-L-alanine) by mitochondria in exchange of L-glutamate and proton. Can also exchange L-cysteinesulfinate with aspartate in their anionic form without any proton translocation. Lacks transport activity towards L-glutamine or gamma-aminobutyric acid (GABA). This chain is Electrogenic aspartate/glutamate antiporter SLC25A12, mitochondrial, found in Homo sapiens (Human).